We begin with the raw amino-acid sequence, 137 residues long: Small heat shock protein IbpA (137 aa).

The 110-residue stretch at 28-137 (SQSNGGYPPY…AKKPRRIEIN (110 aa)) folds into the sHSP domain.

This sequence belongs to the small heat shock protein (HSP20) family. In terms of assembly, monomer. Forms homomultimers of about 100-150 subunits at optimal growth temperatures. Conformation changes to monomers at high temperatures or high ionic concentrations.

It localises to the cytoplasm. Associates with aggregated proteins, together with IbpB, to stabilize and protect them from irreversible denaturation and extensive proteolysis during heat shock and oxidative stress. Aggregated proteins bound to the IbpAB complex are more efficiently refolded and reactivated by the ATP-dependent chaperone systems ClpB and DnaK/DnaJ/GrpE. Its activity is ATP-independent. This chain is Small heat shock protein IbpA, found in Shigella sonnei (strain Ss046).